A 297-amino-acid chain; its full sequence is Vacuolar protein sorting-associated protein 26C (297 aa).

This sequence belongs to the VPS26 family. As to quaternary structure, component of the commander complex that is essential for endosomal recycling of transmembrane cargos; the commander complex is composed of the CCC subcomplex and the retriever subcomplex. Component of the heterotrimeric retriever complex consisting of VPS26C, VPS29 and VPS35L; within the complex interacts with VPS35L. Interacts with SNX17 (via C-terminus); the interaction is direct and associates SNX17 with the retriever complex. Interacts with SNX31; the interaction is direct.

Its subcellular location is the endosome. Its function is as follows. Component of the commander complex that is essential for endosomal recycling of transmembrane cargos; the commander complex is composed of the CCC subcomplex and the retriever subcomplex. Component of the retriever complex, which is a heterotrimeric complex related to retromer cargo-selective complex (CSC) and essential for retromer-independent retrieval and recycling of numerous cargos such as integrin alpha-5/beta-1 (ITGA5:ITGB1). The recruitment of the retriever complex to the endosomal membrane involves CCC and WASH complexes. In the endosomes, drives the retriever and recycling of NxxY-motif-containing cargo proteins by coupling to SNX17, a cargo essential for the homeostatic maintenance of numerous cell surface proteins associated with processes that include cell migration, cell adhesion, nutrient supply and cell signaling. This is Vacuolar protein sorting-associated protein 26C from Mus musculus (Mouse).